A 347-amino-acid polypeptide reads, in one-letter code: Phenylalanine--tRNA ligase alpha subunit (347 aa).

Mg(2+) is bound at residue glutamate 268.

This sequence belongs to the class-II aminoacyl-tRNA synthetase family. Phe-tRNA synthetase alpha subunit type 1 subfamily. As to quaternary structure, tetramer of two alpha and two beta subunits. The cofactor is Mg(2+).

The protein localises to the cytoplasm. The catalysed reaction is tRNA(Phe) + L-phenylalanine + ATP = L-phenylalanyl-tRNA(Phe) + AMP + diphosphate + H(+). The polypeptide is Phenylalanine--tRNA ligase alpha subunit (Leptothrix cholodnii (strain ATCC 51168 / LMG 8142 / SP-6) (Leptothrix discophora (strain SP-6))).